Reading from the N-terminus, the 89-residue chain is Elongation factor 1-beta (89 aa).

Belongs to the EF-1-beta/EF-1-delta family.

Functionally, promotes the exchange of GDP for GTP in EF-1-alpha/GDP, thus allowing the regeneration of EF-1-alpha/GTP that could then be used to form the ternary complex EF-1-alpha/GTP/AAtRNA. The protein is Elongation factor 1-beta of Methanosarcina acetivorans (strain ATCC 35395 / DSM 2834 / JCM 12185 / C2A).